A 463-amino-acid chain; its full sequence is Bifunctional protein GlmU (463 aa).

The pyrophosphorylase stretch occupies residues 1-228 (MEQALSIVVL…PAEVQGVNDR (228 aa)). UDP-N-acetyl-alpha-D-glucosamine is bound by residues 10 to 13 (LAAG), K24, Q75, 80 to 81 (GT), 102 to 104 (YGD), G138, E153, N168, and N226. D104 contributes to the Mg(2+) binding site. Residue N226 participates in Mg(2+) binding. The segment at 229 to 249 (VQLAAAERVWQRRQAEDWMRA) is linker. Residues 250–463 (GVTILDPDRF…RPDRGEGSDA (214 aa)) form an N-acetyltransferase region. UDP-N-acetyl-alpha-D-glucosamine-binding residues include R332 and K350. Residue H362 is the Proton acceptor of the active site. 2 residues coordinate UDP-N-acetyl-alpha-D-glucosamine: Y365 and N376. Acetyl-CoA is bound by residues A379, 385 to 386 (NY), S404, A422, and R439. Residues 437 to 463 (VARSAQRSIHGWRRPGQRPDRGEGSDA) form a disordered region. The span at 453–463 (QRPDRGEGSDA) shows a compositional bias: basic and acidic residues.

It in the N-terminal section; belongs to the N-acetylglucosamine-1-phosphate uridyltransferase family. This sequence in the C-terminal section; belongs to the transferase hexapeptide repeat family. As to quaternary structure, homotrimer. The cofactor is Mg(2+).

It localises to the cytoplasm. It carries out the reaction alpha-D-glucosamine 1-phosphate + acetyl-CoA = N-acetyl-alpha-D-glucosamine 1-phosphate + CoA + H(+). The catalysed reaction is N-acetyl-alpha-D-glucosamine 1-phosphate + UTP + H(+) = UDP-N-acetyl-alpha-D-glucosamine + diphosphate. The protein operates within nucleotide-sugar biosynthesis; UDP-N-acetyl-alpha-D-glucosamine biosynthesis; N-acetyl-alpha-D-glucosamine 1-phosphate from alpha-D-glucosamine 6-phosphate (route II): step 2/2. It participates in nucleotide-sugar biosynthesis; UDP-N-acetyl-alpha-D-glucosamine biosynthesis; UDP-N-acetyl-alpha-D-glucosamine from N-acetyl-alpha-D-glucosamine 1-phosphate: step 1/1. Its pathway is bacterial outer membrane biogenesis; LPS lipid A biosynthesis. In terms of biological role, catalyzes the last two sequential reactions in the de novo biosynthetic pathway for UDP-N-acetylglucosamine (UDP-GlcNAc). The C-terminal domain catalyzes the transfer of acetyl group from acetyl coenzyme A to glucosamine-1-phosphate (GlcN-1-P) to produce N-acetylglucosamine-1-phosphate (GlcNAc-1-P), which is converted into UDP-GlcNAc by the transfer of uridine 5-monophosphate (from uridine 5-triphosphate), a reaction catalyzed by the N-terminal domain. In Alkalilimnicola ehrlichii (strain ATCC BAA-1101 / DSM 17681 / MLHE-1), this protein is Bifunctional protein GlmU.